The following is a 175-amino-acid chain: Bifunctional protein PyrR (175 aa).

Substrate contacts are provided by residues 40-41 (TR), R85, 102-110 (DDVLYTGRT), R135, and V159. A PRPP-binding motif is present at residues 98 to 110 (VIIIDDVLYTGRT).

It belongs to the purine/pyrimidine phosphoribosyltransferase family. PyrR subfamily. Homodimer and homohexamer; in equilibrium.

The catalysed reaction is UMP + diphosphate = 5-phospho-alpha-D-ribose 1-diphosphate + uracil. Regulates transcriptional attenuation of the pyrimidine nucleotide (pyr) operon by binding in a uridine-dependent manner to specific sites on pyr mRNA. This disrupts an antiterminator hairpin in the RNA and favors formation of a downstream transcription terminator, leading to a reduced expression of downstream genes. In terms of biological role, also displays a weak uracil phosphoribosyltransferase activity which is not physiologically significant. The sequence is that of Bifunctional protein PyrR from Staphylococcus saprophyticus subsp. saprophyticus (strain ATCC 15305 / DSM 20229 / NCIMB 8711 / NCTC 7292 / S-41).